The primary structure comprises 275 residues: Undecaprenyl-diphosphatase (275 aa).

A run of 7 helical transmembrane segments spans residues 1–21 (MTTFKAILLGIVQGLTEFLPV), 41–61 (ILFLTILLHVGTLFSVFFVYA), 95–115 (LLIIVATIPTGIIGLFFKDLF), 118–138 (FYNSTLIIGISLLVTGTLLWT), 192–212 (ATKFSFLISIPAILGATVFEV), 223–243 (FTLTMLIAGVLASFLSGVFAI), and 255–275 (LYYFSYYTWTVGSIVILFSLL).

Belongs to the UppP family.

The protein resides in the cell membrane. It carries out the reaction di-trans,octa-cis-undecaprenyl diphosphate + H2O = di-trans,octa-cis-undecaprenyl phosphate + phosphate + H(+). Its function is as follows. Catalyzes the dephosphorylation of undecaprenyl diphosphate (UPP). Confers resistance to bacitracin. The protein is Undecaprenyl-diphosphatase of Alkaliphilus metalliredigens (strain QYMF).